The chain runs to 566 residues: MGSLGMYSESAVRKKSSRGYDVPEGVDIRGRYDEEFARILNKEALLFVADLQRTFRNHIRYSMECRREAKRRYNEGAVPGFDPATKYIRESEWTCASVPPAVADRRVEITGPVERKMIINALNSGAKVFMADFEDALSPNWENLMRGQINLKDAVDGTISFHDKARNKVYKLNDQTAKLFVRPRGWHFAEAHIFIDGEPATGCLVDFGLYFFHNHANFRRSQGQGSGPFFYLPKMEHSREAKIWNSVFERAEKMAGIERGSIRATVLIETLPAVFQMDEILYELRDHSVGLNCGRWDYIFSYVKTFQAHLDRLLPDRVQVGMAQHFMRSYSDLLIRTCHTVVCHVGGMAAQIPIRDDPKANEMALELVRKDKLREAKAGHDGTWAAHPGLIPACMEVFTNSMGNAPNQIRSARRDDAANLTEDDLLQQPRGVRTLEGLRLNTRVGIQYLAAWLTGTGSVPLYNLMEDAATAEISRVQNWQWLKYGVELDGDGLGVRVNKELFARVVEEEMERIEREVGKEKFRKGMYKEACKMFTRQCTAPTLDDFLTLDAYNHIVIHHPRELSRL.

The Proton acceptor role is filled by arginine 182. Aspartate 467 serves as the catalytic Proton donor. The Microbody targeting signal motif lies at 564 to 566; that stretch reads SRL.

Belongs to the malate synthase family.

It localises to the glyoxysome. The enzyme catalyses glyoxylate + acetyl-CoA + H2O = (S)-malate + CoA + H(+). Its pathway is carbohydrate metabolism; glyoxylate cycle; (S)-malate from isocitrate: step 2/2. The polypeptide is Malate synthase, glyoxysomal (Cucurbita maxima (Pumpkin)).